A 502-amino-acid polypeptide reads, in one-letter code: NAD(P)H-quinone oxidoreductase chain 4, chloroplastic (502 aa).

The next 13 membrane-spanning stretches (helical) occupy residues 4–24, 39–59, 89–109, 115–132, 136–156, 169–189, 209–229, 244–264, 276–296, 315–335, 387–407, 418–438, and 466–486; these read YPWL…IPLL, LGIC…HFDI, IGLT…AWPV, LFHS…GLFT, ILLF…LLSM, FILY…TMGL, IALE…KLPI, HYST…YGLI, SIFA…AASI, MGFV…GAIL, SLAL…PGIV, IIIT…LLSM, and IFIS…PNLI.

The protein belongs to the complex I subunit 4 family.

It is found in the plastid. It localises to the chloroplast thylakoid membrane. The enzyme catalyses a plastoquinone + NADH + (n+1) H(+)(in) = a plastoquinol + NAD(+) + n H(+)(out). It catalyses the reaction a plastoquinone + NADPH + (n+1) H(+)(in) = a plastoquinol + NADP(+) + n H(+)(out). This is NAD(P)H-quinone oxidoreductase chain 4, chloroplastic from Huperzia lucidula (Shining clubmoss).